The sequence spans 322 residues: GDSL esterase/lipase At5g03600 (322 aa).

Catalysis depends on S21, which acts as the Nucleophile. Residues D295 and H298 contribute to the active site.

The protein belongs to the 'GDSL' lipolytic enzyme family.

The sequence is that of GDSL esterase/lipase At5g03600 from Arabidopsis thaliana (Mouse-ear cress).